The chain runs to 60 residues: Protein translocase subunit SecE (60 aa).

The helical transmembrane segment at 31–51 (IIVVSTVIFFLVFFYALDIGI) threads the bilayer.

The protein belongs to the SecE/SEC61-gamma family. As to quaternary structure, component of the Sec protein translocase complex. Heterotrimer consisting of SecY, SecE and SecG subunits. The heterotrimers can form oligomers, although 1 heterotrimer is thought to be able to translocate proteins. Interacts with the ribosome. Interacts with SecDF, and other proteins may be involved. Interacts with SecA.

Its subcellular location is the cell membrane. Essential subunit of the Sec protein translocation channel SecYEG. Clamps together the 2 halves of SecY. May contact the channel plug during translocation. This Staphylococcus epidermidis (strain ATCC 35984 / DSM 28319 / BCRC 17069 / CCUG 31568 / BM 3577 / RP62A) protein is Protein translocase subunit SecE.